We begin with the raw amino-acid sequence, 348 residues long: UDP-3-O-acylglucosamine N-acyltransferase (348 aa).

Catalysis depends on histidine 248, which acts as the Proton acceptor.

This sequence belongs to the transferase hexapeptide repeat family. LpxD subfamily. In terms of assembly, homotrimer.

It catalyses the reaction a UDP-3-O-[(3R)-3-hydroxyacyl]-alpha-D-glucosamine + a (3R)-hydroxyacyl-[ACP] = a UDP-2-N,3-O-bis[(3R)-3-hydroxyacyl]-alpha-D-glucosamine + holo-[ACP] + H(+). It functions in the pathway bacterial outer membrane biogenesis; LPS lipid A biosynthesis. Functionally, catalyzes the N-acylation of UDP-3-O-acylglucosamine using 3-hydroxyacyl-ACP as the acyl donor. Is involved in the biosynthesis of lipid A, a phosphorylated glycolipid that anchors the lipopolysaccharide to the outer membrane of the cell. The chain is UDP-3-O-acylglucosamine N-acyltransferase from Rippkaea orientalis (strain PCC 8801 / RF-1) (Cyanothece sp. (strain PCC 8801)).